A 215-amino-acid chain; its full sequence is Probable phosphoglycerate mutase GpmB (215 aa).

Residues 8–15 (RHGESEWN), 21–22 (QG), arginine 58, arginine 60, 82–85 (ELHM), and 151–152 (GI) each bind substrate. Histidine 9 (tele-phosphohistidine intermediate) is an active-site residue. Residue glutamate 82 is the Proton donor/acceptor of the active site.

This sequence belongs to the phosphoglycerate mutase family. GpmB subfamily.

The catalysed reaction is (2R)-2-phosphoglycerate = (2R)-3-phosphoglycerate. It participates in carbohydrate degradation; glycolysis; pyruvate from D-glyceraldehyde 3-phosphate: step 3/5. The chain is Probable phosphoglycerate mutase GpmB from Photorhabdus laumondii subsp. laumondii (strain DSM 15139 / CIP 105565 / TT01) (Photorhabdus luminescens subsp. laumondii).